The following is a 125-amino-acid chain: Snaclec botrocetin subunit beta (125 aa).

3 disulfides stabilise this stretch: cysteine 2-cysteine 13, cysteine 30-cysteine 121, and cysteine 98-cysteine 113. The C-type lectin domain occupies 9–122 (YEGHCYRFFK…CTRFKNFVCE (114 aa)).

This sequence belongs to the snaclec family. As to quaternary structure, heterodimer of subunits alpha and beta; disulfide-linked. Botrocetin and vWF form a soluble complex. Expressed by the venom gland.

The protein localises to the secreted. Snaclec that binds to von Willebrand factor (VWF) and induces its interaction with GPIbalpha (GP1BA) (via the vWF A1 domain), resulting in platelet aggregation. This is Snaclec botrocetin subunit beta from Bothrops jararaca (Jararaca).